The following is a 240-amino-acid chain: tRNA (guanine-N(1)-)-methyltransferase (240 aa).

S-adenosyl-L-methionine contacts are provided by residues G111 and 130 to 135; that span reads IGDYVI.

Belongs to the RNA methyltransferase TrmD family. As to quaternary structure, homodimer.

It localises to the cytoplasm. The enzyme catalyses guanosine(37) in tRNA + S-adenosyl-L-methionine = N(1)-methylguanosine(37) in tRNA + S-adenosyl-L-homocysteine + H(+). Specifically methylates guanosine-37 in various tRNAs. The polypeptide is tRNA (guanine-N(1)-)-methyltransferase (Mycoplasma mycoides subsp. mycoides SC (strain CCUG 32753 / NCTC 10114 / PG1)).